A 127-amino-acid polypeptide reads, in one-letter code: Ribosome-binding factor A (127 aa).

This sequence belongs to the RbfA family. In terms of assembly, monomer. Binds 30S ribosomal subunits, but not 50S ribosomal subunits or 70S ribosomes.

The protein localises to the cytoplasm. One of several proteins that assist in the late maturation steps of the functional core of the 30S ribosomal subunit. Associates with free 30S ribosomal subunits (but not with 30S subunits that are part of 70S ribosomes or polysomes). Required for efficient processing of 16S rRNA. May interact with the 5'-terminal helix region of 16S rRNA. This Chloroflexus aurantiacus (strain ATCC 29366 / DSM 635 / J-10-fl) protein is Ribosome-binding factor A.